We begin with the raw amino-acid sequence, 631 residues long: 1-deoxy-D-xylulose-5-phosphate synthase (631 aa).

Residues H73 and G114–S116 each bind thiamine diphosphate. D145 is a binding site for Mg(2+). Thiamine diphosphate-binding positions include G146 to A147, N174, Y285, and E366. A Mg(2+)-binding site is contributed by N174.

Belongs to the transketolase family. DXPS subfamily. Homodimer. Requires Mg(2+) as cofactor. The cofactor is thiamine diphosphate.

It catalyses the reaction D-glyceraldehyde 3-phosphate + pyruvate + H(+) = 1-deoxy-D-xylulose 5-phosphate + CO2. It functions in the pathway metabolic intermediate biosynthesis; 1-deoxy-D-xylulose 5-phosphate biosynthesis; 1-deoxy-D-xylulose 5-phosphate from D-glyceraldehyde 3-phosphate and pyruvate: step 1/1. Catalyzes the acyloin condensation reaction between C atoms 2 and 3 of pyruvate and glyceraldehyde 3-phosphate to yield 1-deoxy-D-xylulose-5-phosphate (DXP). In Desulfitobacterium hafniense (strain DSM 10664 / DCB-2), this protein is 1-deoxy-D-xylulose-5-phosphate synthase.